The primary structure comprises 197 residues: RNA pyrophosphohydrolase (197 aa).

The Nudix hydrolase domain maps to 6–154 (GYRPNVGIVL…KREVYQLALS (149 aa)). Residues 38-59 (GGIQHGESPEQAMYRELHEEVG) carry the Nudix box motif.

The protein belongs to the Nudix hydrolase family. RppH subfamily. A divalent metal cation serves as cofactor.

Functionally, accelerates the degradation of transcripts by removing pyrophosphate from the 5'-end of triphosphorylated RNA, leading to a more labile monophosphorylated state that can stimulate subsequent ribonuclease cleavage. This chain is RNA pyrophosphohydrolase, found in Polynucleobacter necessarius subsp. necessarius (strain STIR1).